The sequence spans 458 residues: Mannan endo-1,6-alpha-mannosidase DFG5 (458 aa).

Positions 1–26 (MIVNISAKMILSICFTFLSFFKATHA) are cleaved as a signal peptide. 9 N-linked (GlcNAc...) asparagine glycosylation sites follow: asparagine 89, asparagine 114, asparagine 138, asparagine 208, asparagine 231, asparagine 245, asparagine 270, asparagine 273, and asparagine 417. Residues 399-418 (PYKEDNGGTSKGDANAGMNS) are disordered. The GPI-anchor amidated glycine moiety is linked to residue glycine 437. Positions 438–458 (AAIITAVILSVLTGGAVWMLF) are cleaved as a propeptide — removed in mature form.

The protein belongs to the glycosyl hydrolase 76 family. Post-translationally, N-glycosylated.

The protein localises to the cell membrane. It carries out the reaction Random hydrolysis of (1-&gt;6)-alpha-D-mannosidic linkages in unbranched (1-&gt;6)-mannans.. In terms of biological role, required for normal synthesis of the cell wall. This chain is Mannan endo-1,6-alpha-mannosidase DFG5 (DFG5), found in Saccharomyces cerevisiae (strain ATCC 204508 / S288c) (Baker's yeast).